The following is a 168-amino-acid chain: Photosystem I assembly protein Ycf3 (168 aa).

3 TPR repeats span residues 35–68 (AFTY…EIDP), 72–105 (SYIL…NPFL), and 120–153 (GEQA…TPGN).

This sequence belongs to the Ycf3 family.

It is found in the plastid. The protein localises to the chloroplast thylakoid membrane. Its function is as follows. Essential for the assembly of the photosystem I (PSI) complex. May act as a chaperone-like factor to guide the assembly of the PSI subunits. In Nicotiana sylvestris (Wood tobacco), this protein is Photosystem I assembly protein Ycf3.